The chain runs to 203 residues: Large ribosomal subunit protein uL22 (203 aa).

Composition is skewed to polar residues over residues 116–126 and 134–167; these read QNGGESQNQEY and VSKSPENTQSGALSQQIRGEQPQNDPENGVDSQL. Residues 116–203 are disordered; sequence QNGGESQNQE…TVLAQEKEVK (88 aa). Residues 168 to 194 show a composition bias toward low complexity; the sequence is SAKTNSTTTAKKTDLADNNTKNDATNT.

It belongs to the universal ribosomal protein uL22 family. Part of the 50S ribosomal subunit.

In terms of biological role, this protein binds specifically to 23S rRNA; its binding is stimulated by other ribosomal proteins, e.g. L4, L17, and L20. It is important during the early stages of 50S assembly. It makes multiple contacts with different domains of the 23S rRNA in the assembled 50S subunit and ribosome. Functionally, the globular domain of the protein is located near the polypeptide exit tunnel on the outside of the subunit, while an extended beta-hairpin is found that lines the wall of the exit tunnel in the center of the 70S ribosome. This Mesomycoplasma hyopneumoniae (strain 232) (Mycoplasma hyopneumoniae) protein is Large ribosomal subunit protein uL22.